Here is a 251-residue protein sequence, read N- to C-terminus: uncharacterized protein (251 aa).

The interval 229–251 is disordered; that stretch reads TSTETSPEHQADLKDDNSDISST. The span at 234–245 shows a compositional bias: basic and acidic residues; the sequence is SPEHQADLKDDN.

This is an uncharacterized protein from Acanthamoeba polyphaga (Amoeba).